Consider the following 370-residue polypeptide: Homoserine kinase (370 aa).

Residues 1–34 (MASLCFQSPSKPISYFQPKSNPSPPLFAKVSVFR) constitute a chloroplast transit peptide. 143-154 (LPLGSGLGSSAA) provides a ligand contact to ATP.

The protein belongs to the GHMP kinase family. Homoserine kinase subfamily.

The protein resides in the plastid. It localises to the chloroplast stroma. The catalysed reaction is L-homoserine + ATP = O-phospho-L-homoserine + ADP + H(+). It participates in amino-acid biosynthesis; L-threonine biosynthesis; L-threonine from L-aspartate: step 4/5. Functionally, catalyzes the ATP-dependent phosphorylation of L-homoserine to L-homoserine phosphate. Is specific for L-homoserine and cannot use other substrates such D-serine, L-serine, D-threonine and L-threonine, galactose or D-homoserine in vitro. Required for susceptibility to the downy mildew pathogen Hyaloperonospora parasitica. In Arabidopsis thaliana (Mouse-ear cress), this protein is Homoserine kinase (HSK).